The sequence spans 442 residues: Cytochrome c biogenesis CcmF C-terminal-like mitochondrial protein (442 aa).

A run of 3 helical transmembrane segments spans residues 6 to 26, 39 to 59, and 122 to 142; these read NFFF…PVLL, PFFN…LVYL, and YLES…FFLA. Residues 151-175 form a disordered region; it reads RARRRKGQTLRPNGNEQRRNDKMRC. The span at 166 to 175 shows a compositional bias: basic and acidic residues; that stretch reads EQRRNDKMRC. A helical membrane pass occupies residues 411-431; it reads FIFFIWIGFMLASLGGLPSLL.

This sequence belongs to the CcmF/CycK/Ccl1/NrfE/CcsA family. As to quaternary structure, interacts with CCMFN2.

It is found in the mitochondrion inner membrane. Functionally, forms a complex with CCMFN1, CCMFN2 and CCMH that performs the assembly of heme with c-type apocytochromes in mitochondria. In Arabidopsis thaliana (Mouse-ear cress), this protein is Cytochrome c biogenesis CcmF C-terminal-like mitochondrial protein (CCMFC).